Here is a 159-residue protein sequence, read N- to C-terminus: UPF0178 protein AZC_4000 (159 aa).

This sequence belongs to the UPF0178 family.

In Azorhizobium caulinodans (strain ATCC 43989 / DSM 5975 / JCM 20966 / LMG 6465 / NBRC 14845 / NCIMB 13405 / ORS 571), this protein is UPF0178 protein AZC_4000.